Reading from the N-terminus, the 393-residue chain is Formate-dependent phosphoribosylglycinamide formyltransferase (393 aa).

N(1)-(5-phospho-beta-D-ribosyl)glycinamide is bound by residues 22–23 and glutamate 82; that span reads EL. ATP-binding positions include arginine 114, lysine 155, 160–165, 195–198, and glutamate 203; these read SSGKGQ and EGFI. The ATP-grasp domain occupies 119 to 308; it reads RLAAEELDLP…QFALHARAIL (190 aa). Residues glutamate 267 and glutamate 279 each coordinate Mg(2+). Residues aspartate 286, lysine 356, and 363–364 contribute to the N(1)-(5-phospho-beta-D-ribosyl)glycinamide site; that span reads RR.

The protein belongs to the PurK/PurT family. In terms of assembly, homodimer.

The catalysed reaction is N(1)-(5-phospho-beta-D-ribosyl)glycinamide + formate + ATP = N(2)-formyl-N(1)-(5-phospho-beta-D-ribosyl)glycinamide + ADP + phosphate + H(+). The protein operates within purine metabolism; IMP biosynthesis via de novo pathway; N(2)-formyl-N(1)-(5-phospho-D-ribosyl)glycinamide from N(1)-(5-phospho-D-ribosyl)glycinamide (formate route): step 1/1. In terms of biological role, involved in the de novo purine biosynthesis. Catalyzes the transfer of formate to 5-phospho-ribosyl-glycinamide (GAR), producing 5-phospho-ribosyl-N-formylglycinamide (FGAR). Formate is provided by PurU via hydrolysis of 10-formyl-tetrahydrofolate. This chain is Formate-dependent phosphoribosylglycinamide formyltransferase, found in Pseudomonas entomophila (strain L48).